The following is a 405-amino-acid chain: Argininosuccinate synthase (405 aa).

Residue 11–19 participates in ATP binding; it reads AYSGGLDTS. Tyr-90 is a binding site for L-citrulline. Gly-119 is an ATP binding site. L-aspartate-binding residues include Thr-121, Asn-125, and Asp-126. Asn-125 contributes to the L-citrulline binding site. Arg-129, Ser-178, Ser-187, Glu-263, and Tyr-275 together coordinate L-citrulline.

Belongs to the argininosuccinate synthase family. Type 1 subfamily. As to quaternary structure, homotetramer.

The protein localises to the cytoplasm. The catalysed reaction is L-citrulline + L-aspartate + ATP = 2-(N(omega)-L-arginino)succinate + AMP + diphosphate + H(+). It functions in the pathway amino-acid biosynthesis; L-arginine biosynthesis; L-arginine from L-ornithine and carbamoyl phosphate: step 2/3. In Legionella pneumophila (strain Corby), this protein is Argininosuccinate synthase.